Here is a 1045-residue protein sequence, read N- to C-terminus: Isoleucine--tRNA ligase (1045 aa).

A 'HIGH' region motif is present at residues 49-59 (PYCSGRIHLGT). Positions 591-595 (KMSKS) match the 'KMSKS' region motif. Lys-594 is an ATP binding site.

It belongs to the class-I aminoacyl-tRNA synthetase family. IleS type 2 subfamily. As to quaternary structure, monomer. Requires Zn(2+) as cofactor.

It is found in the cytoplasm. The enzyme catalyses tRNA(Ile) + L-isoleucine + ATP = L-isoleucyl-tRNA(Ile) + AMP + diphosphate. Functionally, catalyzes the attachment of isoleucine to tRNA(Ile). As IleRS can inadvertently accommodate and process structurally similar amino acids such as valine, to avoid such errors it has two additional distinct tRNA(Ile)-dependent editing activities. One activity is designated as 'pretransfer' editing and involves the hydrolysis of activated Val-AMP. The other activity is designated 'posttransfer' editing and involves deacylation of mischarged Val-tRNA(Ile). The chain is Isoleucine--tRNA ligase from Methanothermobacter marburgensis (strain ATCC BAA-927 / DSM 2133 / JCM 14651 / NBRC 100331 / OCM 82 / Marburg) (Methanobacterium thermoautotrophicum).